Consider the following 106-residue polypeptide: MRGGGNMQQMMKQMQKMQKKMAEEQEKLKEERIEGTAGGGMVTVVVSGHKEVLDVIIKEEVVDPEDIEMLQDLVLAATNDALTKADDVTAQRLGQHTKGLNIPGMM.

The disordered stretch occupies residues 1–34 (MRGGGNMQQMMKQMQKMQKKMAEEQEKLKEERIE). The segment covering 7–16 (MQQMMKQMQK) has biased composition (low complexity). Positions 20 to 34 (KMAEEQEKLKEERIE) are enriched in basic and acidic residues.

It belongs to the YbaB/EbfC family. In terms of assembly, homodimer.

The protein resides in the cytoplasm. Its subcellular location is the nucleoid. Its function is as follows. Binds to DNA and alters its conformation. May be involved in regulation of gene expression, nucleoid organization and DNA protection. This is Nucleoid-associated protein MCCL_1934 from Macrococcus caseolyticus (strain JCSC5402) (Macrococcoides caseolyticum).